A 632-amino-acid chain; its full sequence is tRNA uridine 5-carboxymethylaminomethyl modification enzyme MnmG (632 aa).

Residues 15 to 20 (GAGHAG), I127, and S182 each bind FAD. 276 to 290 (GPRYCPSIEDKIVRF) is an NAD(+) binding site. FAD is bound at residue Q373.

The protein belongs to the MnmG family. As to quaternary structure, homodimer. Heterotetramer of two MnmE and two MnmG subunits. It depends on FAD as a cofactor.

The protein resides in the cytoplasm. Functionally, NAD-binding protein involved in the addition of a carboxymethylaminomethyl (cmnm) group at the wobble position (U34) of certain tRNAs, forming tRNA-cmnm(5)s(2)U34. The protein is tRNA uridine 5-carboxymethylaminomethyl modification enzyme MnmG of Streptococcus pyogenes serotype M3 (strain SSI-1).